Reading from the N-terminus, the 544-residue chain is Zinc finger protein 502 (544 aa).

Residue K43 forms a Glycyl lysine isopeptide (Lys-Gly) (interchain with G-Cter in SUMO2) linkage. 14 C2H2-type zinc fingers span residues 155–177 (WKCN…QRTH), 183–205 (YTCE…QRIH), 211–233 (YGCE…QRIH), 239–261 (YKCN…QRIH), 267–289 (YKCN…QRIH), 295–317 (YICS…QRIH), 323–345 (HKCD…QRIH), 351–373 (YKCK…QRIH), 379–401 (YKCK…QRIH), 407–429 (YKCS…QRSH), 435–457 (YKCN…MRIH), 463–485 (YKCK…HRTH), 491–513 (YKCS…YRIH), and 519–541 (YECI…QKLH).

It belongs to the krueppel C2H2-type zinc-finger protein family. (Microbial infection) Interacts with human respiratory syncytial virus (HRSV) matrix protein; this interaction probably facilitates viral release.

Its subcellular location is the nucleus. Its function is as follows. May be involved in transcriptional regulation. This Homo sapiens (Human) protein is Zinc finger protein 502 (ZNF502).